The chain runs to 105 residues: uncharacterized protein (105 aa).

Residues 31 to 47 (SVNLPSPSVKPSVTPSV) show a composition bias toward low complexity. A disordered region spans residues 31 to 80 (SVNLPSPSVKPSVTPSVKKPPHVIRSDYSKPREKPAKVAKKPTVKNDKKP). The span at 54 to 66 (IRSDYSKPREKPA) shows a compositional bias: basic and acidic residues.

This is an uncharacterized protein from Caenorhabditis elegans.